The primary structure comprises 496 residues: MAVASRLAVARVAPDGGAAGRRRRRRGRPVVAVPTAAGRGRGRGGAVAASPPTEEAVQMTEPLTKEDLMAYLVSGCKPKENWRIGTEHEKFGFEVDTLRPIKYDQIRDILNGLAERFDWDKIVEENNVIGLKQGKQSISLEPGGQFELSGAPLETLHQTCAEVNSHLYQVKAVGEEMGIGFLGIGFQPKWALSDIPIMPKGRYEIMRNYMPKVGSLGLDMMFRTCTVQVNLDFSSEQDMIRKFRTGLALQPIATAIFANSPFKEGKPNGYLSLRSHIWTDTDNNRSGMLPFVFDDSFGFERYVDYALDVPMYFVYRNKKYIDCTGMSFRDFMVGKLPQAPGELPTLNDWENHLTTIFPEVRLKRYLEMRGADGGPWRRLCALPAFWVGLLYDEESLQSISDMTSDWTNEEREMLRRKVPVTGLKTPFRDGYVRDLAEEILQLSKNGLERRGYKEVGFLREVDAVISSGVTPAERLLNLYETKWQRSVDPVFQELLY.

The transit peptide at 1-34 (MAVASRLAVARVAPDGGAAGRRRRRRGRPVVAVP) directs the protein to the chloroplast. Residues 14-53 (PDGGAAGRRRRRRGRPVVAVPTAAGRGRGRGGAVAASPPT) form a disordered region. Residues 29–38 (PVVAVPTAAG) show a composition bias toward low complexity. C160 and C380 form a disulfide bridge.

This sequence belongs to the carboxylate-amine ligase family. Glutamate--cysteine ligase type 2 subfamily. Homodimer or monomer when oxidized or reduced, respectively. Post-translationally, the Cys-160-Cys-380 disulfide bridge is known to modulate the enzyme activity according to the redox status. The oxidized form constitutes the active enzyme.

It is found in the plastid. It localises to the chloroplast. It carries out the reaction L-cysteine + L-glutamate + ATP = gamma-L-glutamyl-L-cysteine + ADP + phosphate + H(+). Its pathway is sulfur metabolism; glutathione biosynthesis; glutathione from L-cysteine and L-glutamate: step 1/2. In Oryza sativa subsp. japonica (Rice), this protein is Glutamate--cysteine ligase B, chloroplastic (GSH1-2).